A 501-amino-acid chain; its full sequence is Lysine--tRNA ligase (501 aa).

Positions 404 and 411 each coordinate Mg(2+).

This sequence belongs to the class-II aminoacyl-tRNA synthetase family. In terms of assembly, homodimer. Requires Mg(2+) as cofactor.

The protein localises to the cytoplasm. The enzyme catalyses tRNA(Lys) + L-lysine + ATP = L-lysyl-tRNA(Lys) + AMP + diphosphate. This Campylobacter jejuni (strain RM1221) protein is Lysine--tRNA ligase.